The following is a 334-amino-acid chain: L-lactate dehydrogenase B chain (334 aa).

NAD(+)-binding positions include 30–58 (GQVG…LEDK) and arginine 100. 3 residues coordinate substrate: arginine 107, asparagine 139, and arginine 170. Asparagine 139 is a binding site for NAD(+). Histidine 194 serves as the catalytic Proton acceptor. Position 249 (threonine 249) interacts with substrate.

It belongs to the LDH/MDH superfamily. LDH family. In terms of assembly, homotetramer.

The protein resides in the cytoplasm. The enzyme catalyses (S)-lactate + NAD(+) = pyruvate + NADH + H(+). It participates in fermentation; pyruvate fermentation to lactate; (S)-lactate from pyruvate: step 1/1. Its function is as follows. Interconverts simultaneously and stereospecifically pyruvate and lactate with concomitant interconversion of NADH and NAD(+). The chain is L-lactate dehydrogenase B chain (ldhb) from Squalus acanthias (Spiny dogfish).